Here is a 210-residue protein sequence, read N- to C-terminus: 3-hexulose-6-phosphate synthase (210 aa).

This sequence belongs to the HPS/KGPDC family. HPS subfamily.

The enzyme catalyses D-ribulose 5-phosphate + formaldehyde = D-arabino-hex-3-ulose 6-phosphate. It functions in the pathway one-carbon metabolism; formaldehyde assimilation via RuMP pathway; D-fructose 6-phosphate from D-ribulose 5-phosphate and formaldehyde: step 1/2. Catalyzes the condensation of ribulose 5-phosphate with formaldehyde to form 3-hexulose 6-phosphate. This is 3-hexulose-6-phosphate synthase from Staphylococcus aureus (strain USA300).